The following is a 105-amino-acid chain: Cytochrome c-553-like (105 aa).

Residues 1–29 form the signal peptide; that stretch reads MAGIVSLVILAVALFSFMNFDPYVSQVLA. Heme c contacts are provided by cysteine 45, cysteine 48, histidine 49, and methionine 85.

Binds 1 heme c group covalently per subunit.

The polypeptide is Cytochrome c-553-like (cytM) (Synechocystis sp. (strain ATCC 27184 / PCC 6803 / Kazusa)).